Consider the following 883-residue polypeptide: Probable ribonuclease ZC3H12C (883 aa).

2 disordered regions span residues 53 to 109 (QLSP…ISVE) and 139 to 158 (DFKP…PPDV). S230 bears the Phosphoserine mark. An RNase NYN domain is found at 245–400 (LRPIVIDGSN…LGRHGPSLDN (156 aa)). The C3H1-type zinc finger occupies 410–435 (EHKKQPCPYGKKCTYGHKCKYYHPER). 3 disordered regions span residues 456-551 (AKTA…FPPQ), 680-738 (FHDP…KAPH), and 754-775 (SRLY…EGLG). Residues 466-477 (KSNSVPCSTKAD) show a composition bias toward polar residues. A compositionally biased stretch (basic and acidic residues) spans 503 to 515 (LEEKLPTKNKLET). Positions 517–542 (SVPSLVSIPATSTAKPQSTTSLSNGL) are enriched in polar residues. A compositionally biased stretch (low complexity) spans 705–714 (HLALHLPHSA).

Belongs to the ZC3H12 family. Requires Mg(2+) as cofactor.

Its function is as follows. May function as RNase and regulate the levels of target RNA species. The protein is Probable ribonuclease ZC3H12C (ZC3H12C) of Homo sapiens (Human).